Reading from the N-terminus, the 177-residue chain is Gamma-crystallin M1-2 (177 aa).

Beta/gamma crystallin 'Greek key' domains are found at residues 2 to 40 and 41 to 83; these read GKIIFYEDRNFQGRSYECSNDNPDLQPNFNACNSVRVEN and GCWM…RLLS. Positions 84-90 are connecting peptide; sequence QNLGIGT. 2 consecutive Beta/gamma crystallin 'Greek key' domains span residues 91–131 and 132–174; these read NKLR…NVLD and GYWI…RRVI.

This sequence belongs to the beta/gamma-crystallin family. As to quaternary structure, monomer.

In terms of biological role, crystallins are the dominant structural components of the vertebrate eye lens. The chain is Gamma-crystallin M1-2 from Aquarana catesbeiana (American bullfrog).